Here is a 307-residue protein sequence, read N- to C-terminus: Thioredoxin reductase (307 aa).

36–43 (DNAAPGGK) lines the FAD pocket. Cys-138 and Cys-141 form a disulfide bridge. Residue 278-287 (DIRIKDIRQI) coordinates FAD.

This sequence belongs to the class-II pyridine nucleotide-disulfide oxidoreductase family. In terms of assembly, homodimer. It depends on FAD as a cofactor.

The protein resides in the cytoplasm. The enzyme catalyses [thioredoxin]-dithiol + NADP(+) = [thioredoxin]-disulfide + NADPH + H(+). The chain is Thioredoxin reductase (trxB) from Mycoplasmopsis pulmonis (strain UAB CTIP) (Mycoplasma pulmonis).